The sequence spans 197 residues: Interleukin-17C (197 aa).

An N-terminal signal peptide occupies residues 1–18 (MTLLPGLLFLTWLHTCLA). Disulfide bonds link cysteine 129/cysteine 189 and cysteine 134/cysteine 191.

It belongs to the IL-17 family. As to quaternary structure, binds to a heterodimer formed by IL17RA and IL17RE.

Its subcellular location is the secreted. Cytokine that plays a crucial role in innate immunity of the epithelium, including to intestinal bacterial pathogens, in an autocrine manner. Stimulates the production of antibacterial peptides and pro-inflammatory molecules for host defense by signaling through the NF-kappa-B and MAPK pathways. Acts synergically with IL22 in inducing the expression of antibacterial peptides, including S100A8, S100A9, REG3A and REG3G. Synergy is also observed with TNF and IL1B in inducing DEFB2 from keratinocytes. Depending on the type of insult, may have both protective and pathogenic properties, either by maintaining epithelial homeostasis after an inflammatory challenge or by promoting inflammatory phenotype. Enhanced IL17C/IL17RE signaling may also lead to greater susceptibility to autoimmune diseases. The polypeptide is Interleukin-17C (IL17C) (Homo sapiens (Human)).